A 330-amino-acid chain; its full sequence is Tryptophan--tRNA ligase (330 aa).

ATP contacts are provided by residues 10 to 12 (QAT) and 18 to 19 (GN). The 'HIGH' region motif lies at 11–19 (ATGSLHLGN). Asp134 contributes to the L-tryptophan binding site. Residues 146–148 (GED), Ile186, and 195–199 (KMSKS) contribute to the ATP site. A 'KMSKS' region motif is present at residues 195–199 (KMSKS).

The protein belongs to the class-I aminoacyl-tRNA synthetase family. Homodimer.

Its subcellular location is the cytoplasm. It carries out the reaction tRNA(Trp) + L-tryptophan + ATP = L-tryptophyl-tRNA(Trp) + AMP + diphosphate + H(+). Its function is as follows. Catalyzes the attachment of tryptophan to tRNA(Trp). This Rickettsia felis (strain ATCC VR-1525 / URRWXCal2) (Rickettsia azadi) protein is Tryptophan--tRNA ligase.